A 223-amino-acid polypeptide reads, in one-letter code: Ribosome maturation factor RimM (223 aa).

The segment covering 1 to 12 has biased composition (low complexity); the sequence is MARRPGSSSRGP. Disordered regions lie at residues 1 to 44 and 204 to 223; these read MARR…DPGL and ADPP…DDPG. Residues 136-210 form the PRC barrel domain; that stretch reads EDEFFLTDLI…KVVADPPDDL (75 aa).

This sequence belongs to the RimM family. As to quaternary structure, binds ribosomal protein uS19.

It localises to the cytoplasm. Functionally, an accessory protein needed during the final step in the assembly of 30S ribosomal subunit, possibly for assembly of the head region. Essential for efficient processing of 16S rRNA. May be needed both before and after RbfA during the maturation of 16S rRNA. It has affinity for free ribosomal 30S subunits but not for 70S ribosomes. This is Ribosome maturation factor RimM from Methylorubrum extorquens (strain PA1) (Methylobacterium extorquens).